Reading from the N-terminus, the 70-residue chain is uncharacterized protein (70 aa).

This is an uncharacterized protein from Thermoproteus tenax virus 1 (strain KRA1) (TTV1).